The sequence spans 334 residues: 6-phosphogluconolactonase (334 aa).

Belongs to the cycloisomerase 2 family.

The catalysed reaction is 6-phospho-D-glucono-1,5-lactone + H2O = 6-phospho-D-gluconate + H(+). It participates in carbohydrate degradation; pentose phosphate pathway; D-ribulose 5-phosphate from D-glucose 6-phosphate (oxidative stage): step 2/3. Catalyzes the hydrolysis of 6-phosphogluconolactone to 6-phosphogluconate. The polypeptide is 6-phosphogluconolactonase (Yersinia pseudotuberculosis serotype IB (strain PB1/+)).